Reading from the N-terminus, the 338-residue chain is Mitotic spindle-associated protein SHE1 (338 aa).

Basic and acidic residues predominate over residues 1 to 14 (MNDKLQEEHNEKDT). Disordered regions lie at residues 1–29 (MNDK…MSID), 67–88 (LKDQ…SGSY), and 116–146 (HTPK…IPYT). Over residues 72–88 (EQQYNGDKNNEPKSGSY) the composition is skewed to polar residues. Serine 165 carries the phosphoserine modification. 2 disordered regions span residues 210 to 263 (TNSL…QGTN) and 284 to 338 (RSTS…PIWR). Residues 216 to 234 (INSAHRNTSSSSTASSIPR) are compositionally biased toward low complexity. Positions 242 to 254 (SIRDLHAKTKPVE) are enriched in basic and acidic residues. Composition is skewed to polar residues over residues 284–297 (RSTS…GTSA) and 312–330 (SKTS…ATGT).

It belongs to the SHE1 family.

Its subcellular location is the cytoplasm. It localises to the cytoskeleton. The protein localises to the spindle. The protein resides in the bud neck. Functionally, may have a role related to the spindle integrity function of the DAM1 complex, which is essential for proper chromosome segregation. Causes growth arrest when highly overexpressed. This is Mitotic spindle-associated protein SHE1 (SHE1) from Saccharomyces cerevisiae (strain YJM789) (Baker's yeast).